The following is a 160-amino-acid chain: SsrA-binding protein (160 aa).

This sequence belongs to the SmpB family.

It is found in the cytoplasm. In terms of biological role, required for rescue of stalled ribosomes mediated by trans-translation. Binds to transfer-messenger RNA (tmRNA), required for stable association of tmRNA with ribosomes. tmRNA and SmpB together mimic tRNA shape, replacing the anticodon stem-loop with SmpB. tmRNA is encoded by the ssrA gene; the 2 termini fold to resemble tRNA(Ala) and it encodes a 'tag peptide', a short internal open reading frame. During trans-translation Ala-aminoacylated tmRNA acts like a tRNA, entering the A-site of stalled ribosomes, displacing the stalled mRNA. The ribosome then switches to translate the ORF on the tmRNA; the nascent peptide is terminated with the 'tag peptide' encoded by the tmRNA and targeted for degradation. The ribosome is freed to recommence translation, which seems to be the essential function of trans-translation. The sequence is that of SsrA-binding protein from Cronobacter sakazakii (strain ATCC BAA-894) (Enterobacter sakazakii).